Reading from the N-terminus, the 540-residue chain is Chaperonin GroEL (540 aa).

Residues Thr29 to Pro32, Asp86 to Thr90, Gly413, and Asp493 contribute to the ATP site. The tract at residues Ala520–Phe540 is disordered.

It belongs to the chaperonin (HSP60) family. Forms a cylinder of 14 subunits composed of two heptameric rings stacked back-to-back. Interacts with the co-chaperonin GroES.

It is found in the cytoplasm. It catalyses the reaction ATP + H2O + a folded polypeptide = ADP + phosphate + an unfolded polypeptide.. Together with its co-chaperonin GroES, plays an essential role in assisting protein folding. The GroEL-GroES system forms a nano-cage that allows encapsulation of the non-native substrate proteins and provides a physical environment optimized to promote and accelerate protein folding. The protein is Chaperonin GroEL of Tropheryma whipplei (strain TW08/27) (Whipple's bacillus).